The chain runs to 273 residues: Dermonecrotic toxin LruSicTox-alphaIC1a (273 aa).

Residue histidine 5 is part of the active site. The Mg(2+) site is built by glutamate 25 and aspartate 27. Catalysis depends on histidine 41, which acts as the Nucleophile. 2 disulfide bridges follow: cysteine 45–cysteine 51 and cysteine 47–cysteine 190. Aspartate 85 is a Mg(2+) binding site.

This sequence belongs to the arthropod phospholipase D family. Class II subfamily. It depends on Mg(2+) as a cofactor. As to expression, expressed by the venom gland.

The protein localises to the secreted. It carries out the reaction an N-(acyl)-sphingosylphosphocholine = an N-(acyl)-sphingosyl-1,3-cyclic phosphate + choline. The enzyme catalyses an N-(acyl)-sphingosylphosphoethanolamine = an N-(acyl)-sphingosyl-1,3-cyclic phosphate + ethanolamine. It catalyses the reaction a 1-acyl-sn-glycero-3-phosphocholine = a 1-acyl-sn-glycero-2,3-cyclic phosphate + choline. The catalysed reaction is a 1-acyl-sn-glycero-3-phosphoethanolamine = a 1-acyl-sn-glycero-2,3-cyclic phosphate + ethanolamine. Its function is as follows. Dermonecrotic toxins cleave the phosphodiester linkage between the phosphate and headgroup of certain phospholipids (sphingolipid and lysolipid substrates), forming an alcohol (often choline) and a cyclic phosphate. This toxin acts on sphingomyelin (SM). It may also act on ceramide phosphoethanolamine (CPE), lysophosphatidylcholine (LPC) and lysophosphatidylethanolamine (LPE), but not on lysophosphatidylserine (LPS), and lysophosphatidylglycerol (LPG). It acts by transphosphatidylation, releasing exclusively cyclic phosphate products as second products. Induces dermonecrosis, hemolysis, increased vascular permeability, edema, inflammatory response, and platelet aggregation. The chain is Dermonecrotic toxin LruSicTox-alphaIC1a from Loxosceles rufescens (Mediterranean recluse spider).